Reading from the N-terminus, the 610-residue chain is All-trans-retinol 13,14-reductase (610 aa).

The first 18 residues, 1-18, serve as a signal peptide directing secretion; sequence MWLPLVLLLAVLLLAVLC.

This sequence belongs to the carotenoid/retinoid oxidoreductase family. CrtISO subfamily. NAD(+) is required as a cofactor. Requires NADP(+) as cofactor. The cofactor is FAD. As to expression, expressed in liver; expression positively correlates with obesity and liver steatosis. Expressed in adipose tissue; expression tends to be decreased in obese versus lean individuals.

It is found in the endoplasmic reticulum membrane. The catalysed reaction is all-trans-13,14-dihydroretinol + A = all-trans-retinol + AH2. Its function is as follows. Catalyzes the saturation of all-trans-retinol to all-trans-13,14-dihydroretinol. Does not exhibit any activity toward all-trans-retinoic acid, nor 9-cis, 11-cis or 13-cis-retinol isomers. May play a role in the metabolism of vitamin A. Independently of retinol conversion, may regulate liver metabolism upstream of MLXIPL/ChREBP. May play a role in adipocyte differentiation. This chain is All-trans-retinol 13,14-reductase (RETSAT), found in Homo sapiens (Human).